Here is a 559-residue protein sequence, read N- to C-terminus: Excitatory amino acid transporter 5 (559 aa).

At 1–16 (MVLDAVLARGRTVCKH) the chain is on the cytoplasmic side. The next 3 membrane-spanning stretches (helical) occupy residues 17–37 (NGLL…GFFL), 60–80 (MLKM…LASL), and 94–114 (AYYL…VSII). Residues 115 to 215 (HPGGAAQKET…EIVYKSEPGT (101 aa)) lie on the Extracellular side of the membrane. N-linked (GlcNAc...) asparagine glycosylation is present at asparagine 190. The helical transmembrane segment at 216 to 236 (SDGMNVLGIVIFSATMGIMLG) threads the bilayer. Asparagine 253 carries an N-linked (GlcNAc...) asparagine glycan. 6 consecutive transmembrane segments (helical) span residues 259–279 (IVAV…AGKI), 298–318 (TVVC…YFLI), 329–349 (GVLQ…TLPI), 371–391 (VGAT…AIFI), 413–433 (AASI…VIVL), and 456–476 (FRTM…AHIC).

This sequence belongs to the dicarboxylate/amino acid:cation symporter (DAACS) (TC 2.A.23) family. SLC1A7 subfamily. As to quaternary structure, interacts with the PDZ domains of DLG4. In terms of tissue distribution, expressed in retina, located in both cone and rod photoreceptor terminals and in axon terminals of rod bipolar cells.

Its subcellular location is the photoreceptor inner segment membrane. It is found in the synaptic cell membrane. The catalysed reaction is K(+)(in) + L-glutamate(out) + 3 Na(+)(out) + H(+)(out) = K(+)(out) + L-glutamate(in) + 3 Na(+)(in) + H(+)(in). It catalyses the reaction K(+)(in) + L-aspartate(out) + 3 Na(+)(out) + H(+)(out) = K(+)(out) + L-aspartate(in) + 3 Na(+)(in) + H(+)(in). The enzyme catalyses D-aspartate(out) + K(+)(in) + 3 Na(+)(out) + H(+)(out) = D-aspartate(in) + K(+)(out) + 3 Na(+)(in) + H(+)(in). Functionally, sodium-dependent, high-affinity amino acid transporter that mediates the uptake of L-glutamate and also L-aspartate and D-aspartate. Functions as a symporter that transports one amino acid molecule together with two or three Na(+) ions and one proton, in parallel with the counter-transport of one K(+) ion. Acts primarily as an inhibitory glutamate-gated chloride channel being a major inhibitory presynaptic receptor at mammalian rod bipolar cell axon terminals. Glutamate binding gates a large Cl(-) conductance that mediates inhibition, affecting visual processing in the retina. This Mus musculus (Mouse) protein is Excitatory amino acid transporter 5.